The following is a 305-amino-acid chain: MTNQTAIVSVEQLTNSSVLNLIERAEAFKQGATCELTRPVYAMNLFFENSTRTKTSFEMAERKLGLSVMSFEAETSSVSKGETLSDTLKTVQAIGVDFVAVRHPQNYYYDDLLADPAFHLALANGGDGSGQHPSQCLLDMMTIHEEFGHFDGLKVVICGDLRHSRVAKSNMQLLKRLGAQLYFAGPEEWFTAEFNDYGQHVALDSILDQVDVVMLLRIQHERFDSAETMTDEAFHVKYGLTAQRAAQLKASTIWLHPAPVNRDVEIADELVEAPQSRIFKQMHNGVFMRMAMIEYLLKQKNLIKD.

Residues Arg52 and Thr53 each coordinate carbamoyl phosphate. Position 80 (Lys80) interacts with L-aspartate. Carbamoyl phosphate contacts are provided by Arg102, His132, and Gln135. Arg165 and Arg217 together coordinate L-aspartate. The carbamoyl phosphate site is built by Ala258 and Pro259.

The protein belongs to the aspartate/ornithine carbamoyltransferase superfamily. ATCase family. As to quaternary structure, heterododecamer (2C3:3R2) of six catalytic PyrB chains organized as two trimers (C3), and six regulatory PyrI chains organized as three dimers (R2).

The catalysed reaction is carbamoyl phosphate + L-aspartate = N-carbamoyl-L-aspartate + phosphate + H(+). It functions in the pathway pyrimidine metabolism; UMP biosynthesis via de novo pathway; (S)-dihydroorotate from bicarbonate: step 2/3. Functionally, catalyzes the condensation of carbamoyl phosphate and aspartate to form carbamoyl aspartate and inorganic phosphate, the committed step in the de novo pyrimidine nucleotide biosynthesis pathway. This is Aspartate carbamoyltransferase catalytic subunit from Latilactobacillus sakei subsp. sakei (strain 23K) (Lactobacillus sakei subsp. sakei).